Here is a 169-residue protein sequence, read N- to C-terminus: CRISPR system Cmr subunit Cmr5 (169 aa).

Belongs to the CRISPR system Cmr5 family. As to quaternary structure, monomer in isolation. Part of the type III-B Cmr ribonucleoprotein (RNP) complex, an elongated RNP with Cmr2 and Cmr3 as the base, with Cmr4 and Cmr5 forming a helical core along the mature crRNA (39 or 45 nt in length), while the complex is capped by Cmr6 and Cmr1. The 5' end of the crRNA is bound to Cmr2 and Cmr3, while Cmr6 and a Cmr1 subunit (Cmr1-1 or Cmr1-2) cap the 3' end of the crRNA. The target RNA lies antiparallel to the crRNA, with its 5' end near Cmr1 and Cmr6 and its 3' end near Cmr2 and Cmr3; major target cleavage occurs nears the junction of Cmr1/Cmr6 and Cmr4/Cmr, with minor cleavage occurring at 6 nt intervals which coincide with the proposed spacing of Cmr4 subunits. Interacts with Cmr4. Interacts with Cmr2, Cmr4 and Cmr6.

It is found in the cytoplasm. In terms of biological role, CRISPR (clustered regularly interspaced short palindromic repeat), is an adaptive immune system that provides protection against mobile genetic elements (viruses, transposable elements and conjugative plasmids). CRISPR clusters contain sequences complementary to antecedent mobile elements and target invading nucleic acids. CRISPR clusters are transcribed and processed into CRISPR RNA (crRNA), formerly called psiRNA (prokaryotic silencing) in this organism. Part of the Cmr ribonucleoprotein complex which has divalent cation-dependent endoribonuclease activity specific for ssRNA complementary to the crRNA (target NRA), generating 5' hydroxy- and 3' phosphate or 2'-3' cyclic phosphate termini. Cmr4 is probably the subunit that cleaves target RNA. Cmr complex does not cleave ssDNA complementary to the crRNA. Cleavage of invading RNA is guided by the crRNA; substrate cleavage occurs a fixed distance (14 nt) from the 3' end of the crRNA. In vitro reconstitution shows Cmr1-2 and Cmr5 are not absolutely necessary for target cleavage. The chain is CRISPR system Cmr subunit Cmr5 from Pyrococcus furiosus (strain ATCC 43587 / DSM 3638 / JCM 8422 / Vc1).